Here is a 457-residue protein sequence, read N- to C-terminus: MVQITEVNESKAGTANRTAAHTHIKGLGLDDTGAARQVEGGFVGQVEAREACGVIVDLIKAKKMSGRAILLAGGPSTGKTALALAISQELGPKVPFCPLVGSELYSVEVKKTETLMENFRRAIGLRIKETKEVYEGEVTELTPEDAENPLGGYGKTISHVIVGLKSAKGTKTLRLDPTIYDSIQKEKVSIGDVIYIEANTGAVKRVGRSDAYATEFDLEAEEYVPLPKGEVHKKKEIVQDVTLHDLDIANARPQGGQDVISMMGQLMKPKKTEITEKLRFEVNKVVAKYVDQGVAELIPGVLFIDEANMLDIEIFTYLNKALESDIAPIVVLASNRGMTTVRGTEDVISPHGIPADLIDRLLIVRTLPYNKDEIRLIIERRSAVENLALEDGALDILADMATHTSLRYALQLLSPAGILSSTAGRQKITIDDINEAKMLFIDAKRSTKILENSDRYM.

73-80 (GGPSTGKT) is an ATP binding site.

It belongs to the RuvB family. As to quaternary structure, may form heterododecamers with RVB2. Component of the SWR1 chromatin remodeling complex, the INO80 chromatin remodeling complex, and of the R2TP complex.

It localises to the nucleus. The catalysed reaction is ATP + H2O = ADP + phosphate + H(+). Functionally, DNA helicase which participates in several chromatin remodeling complexes, including the SWR1 and the INO80 complexes. The SWR1 complex mediates the ATP-dependent exchange of histone H2A for the H2A variant HZT1 leading to transcriptional regulation of selected genes by chromatin remodeling. The INO80 complex remodels chromatin by shifting nucleosomes and is involved in DNA repair. Also involved in pre-rRNA processing. The protein is RuvB-like helicase 1 (RVB1) of Candida glabrata (strain ATCC 2001 / BCRC 20586 / JCM 3761 / NBRC 0622 / NRRL Y-65 / CBS 138) (Yeast).